A 107-amino-acid polypeptide reads, in one-letter code: Ribonuclease P protein component 4 (107 aa).

4 residues coordinate Zn(2+): C66, C69, C92, and C95.

The protein belongs to the eukaryotic/archaeal RNase P protein component 4 family. In terms of assembly, consists of a catalytic RNA component and at least 4-5 protein subunits. Zn(2+) serves as cofactor.

The protein resides in the cytoplasm. The enzyme catalyses Endonucleolytic cleavage of RNA, removing 5'-extranucleotides from tRNA precursor.. In terms of biological role, part of ribonuclease P, a protein complex that generates mature tRNA molecules by cleaving their 5'-ends. The polypeptide is Ribonuclease P protein component 4 (Methanosarcina acetivorans (strain ATCC 35395 / DSM 2834 / JCM 12185 / C2A)).